Reading from the N-terminus, the 670-residue chain is DNA ligase (670 aa).

Residues 36-40 (DAQYD), 85-86 (SL), and Glu-116 each bind NAD(+). The active-site N6-AMP-lysine intermediate is the Lys-118. Residues Arg-139, Glu-174, Lys-290, and Lys-314 each contribute to the NAD(+) site. Zn(2+) is bound by residues Cys-408, Cys-411, Cys-426, and Cys-431. The region spanning 591-670 (STDQTLSGKT…QDFVKLLQQQ (80 aa)) is the BRCT domain.

It belongs to the NAD-dependent DNA ligase family. LigA subfamily. Mg(2+) serves as cofactor. It depends on Mn(2+) as a cofactor.

It carries out the reaction NAD(+) + (deoxyribonucleotide)n-3'-hydroxyl + 5'-phospho-(deoxyribonucleotide)m = (deoxyribonucleotide)n+m + AMP + beta-nicotinamide D-nucleotide.. In terms of biological role, DNA ligase that catalyzes the formation of phosphodiester linkages between 5'-phosphoryl and 3'-hydroxyl groups in double-stranded DNA using NAD as a coenzyme and as the energy source for the reaction. It is essential for DNA replication and repair of damaged DNA. The protein is DNA ligase of Desulforamulus reducens (strain ATCC BAA-1160 / DSM 100696 / MI-1) (Desulfotomaculum reducens).